The following is a 122-amino-acid chain: MRIALIAHDKKKDLMIQFTKDHEDYLSNHTLYATGTTGTRIMEHTKLKVNLKKSGPLGGDQEIGSMIANGKLDLVFFFRDPLTAQPHEPDVSALLRLCDVYDVPLATNNAAADLFIKHLKGK.

An MGS-like domain is found at 1–122 (MRIALIAHDK…DLFIKHLKGK (122 aa)). Substrate is bound by residues histidine 8, lysine 12, 34-37 (TGTT), and 54-55 (SG). Aspartate 60 functions as the Proton donor/acceptor in the catalytic mechanism. Substrate is bound at residue histidine 87.

This sequence belongs to the methylglyoxal synthase family.

It catalyses the reaction dihydroxyacetone phosphate = methylglyoxal + phosphate. Catalyzes the formation of methylglyoxal from dihydroxyacetone phosphate. The sequence is that of Methylglyoxal synthase from Acholeplasma laidlawii (strain PG-8A).